The primary structure comprises 141 residues: Large ribosomal subunit protein uL11 (141 aa).

Belongs to the universal ribosomal protein uL11 family. Part of the ribosomal stalk of the 50S ribosomal subunit. Interacts with L10 and the large rRNA to form the base of the stalk. L10 forms an elongated spine to which L12 dimers bind in a sequential fashion forming a multimeric L10(L12)X complex. In terms of processing, one or more lysine residues are methylated.

Functionally, forms part of the ribosomal stalk which helps the ribosome interact with GTP-bound translation factors. The chain is Large ribosomal subunit protein uL11 from Syntrophomonas wolfei subsp. wolfei (strain DSM 2245B / Goettingen).